A 500-amino-acid chain; its full sequence is NAD(P)H-quinone oxidoreductase chain 4, chloroplastic (500 aa).

The next 12 membrane-spanning stretches (helical) occupy residues 4–24 (FPWL…ILFI), 37–57 (ICIC…NFQL), 80–100 (LGID…TTLA), 134–154 (LLLF…LLSM), 167–187 (FILY…GMGL), 208–228 (GLEI…PPII), 242–262 (HYST…YGLV), 272–292 (AHSL…IYAA), 330–350 (GAIL…FLAG), 386–406 (LASP…GIIT), 416–436 (ILIT…LLSM), and 462–482 (IFIL…PDFV).

The protein belongs to the complex I subunit 4 family.

It localises to the plastid. Its subcellular location is the chloroplast thylakoid membrane. The enzyme catalyses a plastoquinone + NADH + (n+1) H(+)(in) = a plastoquinol + NAD(+) + n H(+)(out). It catalyses the reaction a plastoquinone + NADPH + (n+1) H(+)(in) = a plastoquinol + NADP(+) + n H(+)(out). The polypeptide is NAD(P)H-quinone oxidoreductase chain 4, chloroplastic (Amborella trichopoda).